The following is a 304-amino-acid chain: Small ribosomal subunit biogenesis GTPase RsgA (304 aa).

The CP-type G domain maps to 78 to 237 (HSFLTRPPVA…VADTPGFNRP (160 aa)). GTP contacts are provided by residues 127–130 (TKTD) and 179–187 (GPSGVGKSS). 4 residues coordinate Zn(2+): Cys-262, Cys-267, His-269, and Cys-275.

The protein belongs to the TRAFAC class YlqF/YawG GTPase family. RsgA subfamily. In terms of assembly, monomer. Associates with 30S ribosomal subunit, binds 16S rRNA. Zn(2+) serves as cofactor.

The protein localises to the cytoplasm. One of several proteins that assist in the late maturation steps of the functional core of the 30S ribosomal subunit. Helps release RbfA from mature subunits. May play a role in the assembly of ribosomal proteins into the subunit. Circularly permuted GTPase that catalyzes slow GTP hydrolysis, GTPase activity is stimulated by the 30S ribosomal subunit. This chain is Small ribosomal subunit biogenesis GTPase RsgA, found in Synechococcus sp. (strain CC9605).